A 285-amino-acid chain; its full sequence is Transcription factor E2F6 (285 aa).

Lysine 9 is covalently cross-linked (Glycyl lysine isopeptide (Lys-Gly) (interchain with G-Cter in SUMO2)). A DNA-binding region spans residues 50–129 (YVSMRKALKV…SKNHIRWIGS (80 aa)). Residues 95-129 (KLGVRKRRVYDITNVLDGIDLVEKKSKNHIRWIGS) carry the DEF box motif. A dimerization region spans residues 130-222 (DLSNFGAVPQ…PAPKEDSITV (93 aa)). Residues 143–164 (LQEELSDLSAMEDALDELIKDC) form a leucine-zipper region. The segment at 173–285 (DDKENERLAY…QSEEVLEVSN (113 aa)) is transcription repression. The tract at residues 240–285 (QGSHSSNKTSDNVGTSSSKSKPLEHPQPEKEENPPQQSEEVLEVSN) is disordered. Positions 241 to 259 (GSHSSNKTSDNVGTSSSKS) are enriched in polar residues. The span at 260-272 (KPLEHPQPEKEEN) shows a compositional bias: basic and acidic residues.

Belongs to the E2F/DP family. As to quaternary structure, forms heterodimers with DP family members TFDP1 or TFDP2. Component of the DRTF1/E2F transcription factor complex. Part of the E2F6.com-1 complex in G0 phase composed of E2F6, MGA, MAX, TFDP1, CBX3, BAT8, EUHMTASE1, RING1, RNF2, MBLR, L3MBTL2 and YAF2. Component of some MLL1/MLL complex, at least composed of the core components KMT2A/MLL1, ASH2L, HCFC1/HCF1, WDR5 and RBBP5, as well as the facultative components BACC1, CHD8, E2F6, HSP70, INO80C, KANSL1, LAS1L, MAX, MCRS1, MGA, KAT8/MOF, PELP1, PHF20, PRP31, RING2, RUVB1/TIP49A, RUVB2/TIP49B, SENP3, TAF1, TAF4, TAF6, TAF7, TAF9 and TEX10.

It localises to the nucleus. Inhibitor of E2F-dependent transcription. Binds DNA cooperatively with DP proteins through the E2 recognition site, 5'-TTTC[CG]CGC-3'. Has a preference for the 5'-TTTCCCGC-3' E2F recognition site. E2F6 lacks the transcriptional activation and pocket protein binding domains. Appears to regulate a subset of E2F-dependent genes whose products are required for entry into the cell cycle but not for normal cell cycle progression. Represses expression of some meiosis-specific genes, including SLC25A31/ANT4. May silence expression via the recruitment of a chromatin remodeling complex containing histone H3-K9 methyltransferase activity. Overexpression delays the exit of cells from the S-phase. In Bos taurus (Bovine), this protein is Transcription factor E2F6.